The following is a 271-amino-acid chain: Elongation factor Ts (271 aa).

An involved in Mg(2+) ion dislocation from EF-Tu region spans residues 76–79 (TDFV).

The protein belongs to the EF-Ts family.

It localises to the cytoplasm. Functionally, associates with the EF-Tu.GDP complex and induces the exchange of GDP to GTP. It remains bound to the aminoacyl-tRNA.EF-Tu.GTP complex up to the GTP hydrolysis stage on the ribosome. This chain is Elongation factor Ts, found in Mycobacterium tuberculosis (strain ATCC 25177 / H37Ra).